A 78-amino-acid polypeptide reads, in one-letter code: Large ribosomal subunit protein bL28 (78 aa).

The disordered stretch occupies residues 1–20 (MSRVCQVTGKGPVTGNNISH).

It belongs to the bacterial ribosomal protein bL28 family.

In Stutzerimonas stutzeri (strain A1501) (Pseudomonas stutzeri), this protein is Large ribosomal subunit protein bL28.